We begin with the raw amino-acid sequence, 307 residues long: UPF0282 protein PH1002 (307 aa).

The protein belongs to the UPF0282 family.

The chain is UPF0282 protein PH1002 from Pyrococcus horikoshii (strain ATCC 700860 / DSM 12428 / JCM 9974 / NBRC 100139 / OT-3).